A 258-amino-acid chain; its full sequence is UPF0246 protein plu0566 (258 aa).

This sequence belongs to the UPF0246 family.

This chain is UPF0246 protein plu0566, found in Photorhabdus laumondii subsp. laumondii (strain DSM 15139 / CIP 105565 / TT01) (Photorhabdus luminescens subsp. laumondii).